The sequence spans 250 residues: 1-(5-phosphoribosyl)-5-[(5-phosphoribosylamino)methylideneamino] imidazole-4-carboxamide isomerase (250 aa).

Residue Asp-7 is the Proton acceptor of the active site. The active-site Proton donor is Asp-129.

Belongs to the HisA/HisF family.

The protein resides in the cytoplasm. It catalyses the reaction 1-(5-phospho-beta-D-ribosyl)-5-[(5-phospho-beta-D-ribosylamino)methylideneamino]imidazole-4-carboxamide = 5-[(5-phospho-1-deoxy-D-ribulos-1-ylimino)methylamino]-1-(5-phospho-beta-D-ribosyl)imidazole-4-carboxamide. The protein operates within amino-acid biosynthesis; L-histidine biosynthesis; L-histidine from 5-phospho-alpha-D-ribose 1-diphosphate: step 4/9. This is 1-(5-phosphoribosyl)-5-[(5-phosphoribosylamino)methylideneamino] imidazole-4-carboxamide isomerase from Shewanella denitrificans (strain OS217 / ATCC BAA-1090 / DSM 15013).